The primary structure comprises 2661 residues: 3-methylorcinaldehyde synthase tropA (2661 aa).

The tract at residues 14–271 is N-terminal acylcarrier protein transacylase domain (SAT); the sequence is LLFGSQSLSF…HWSGHEAEVD (258 aa). A Ketosynthase family 3 (KS3) domain is found at 380–796; that stretch reads GDDIAIVGAS…GSNASMVITQ (417 aa). Residues Cys-545, His-680, and His-719 each act as for beta-ketoacyl synthase activity in the active site. The tract at residues 901–1211 is malonyl-CoA:ACP transacylase (MAT) domain; it reads LCFGGQVSTF…QAMSITTDKG (311 aa). Ser-988 functions as the For acyl/malonyl transferase activity in the catalytic mechanism. The segment at 1283–1425 is N-terminal hotdog fold; that stretch reads PDTILSFVGY…GTLVVVPMED (143 aa). The region spanning 1283 to 1600 is the PKS/mFAS DH domain; sequence PDTILSFVGY…FVRIPRKGLA (318 aa). The interval 1288–1599 is product template (PT) domain; sequence SFVGYQDSNK…QFVRIPRKGL (312 aa). The active-site Proton acceptor; for dehydratase activity is His-1318. The C-terminal hotdog fold stretch occupies residues 1453–1600; the sequence is AEEILQGRTI…FVRIPRKGLA (148 aa). Asp-1509 (proton donor; for dehydratase activity) is an active-site residue. The disordered stretch occupies residues 1614-1656; the sequence is ATNAQSRAIPPPSTNTTQSSSQQTPIPKAAAPKKEKKRPGNPK. Residues 1627-1643 show a composition bias toward low complexity; it reads TNTTQSSSQQTPIPKAA. The Carrier 1 domain maps to 1654–1731; that stretch reads NPKLDVLPKL…QLVRVVESIV (78 aa). Ser-1691 is modified (O-(pantetheine 4'-phosphoryl)serine). The segment at 1734–1762 is disordered; that stretch reads EGSETSNLSSDDDDENGTPSTPETDLSDA. The Carrier 2 domain maps to 1764 to 1841; sequence VDAVVDNAEL…DLRQTAPGAA (78 aa). Ser-1801 bears the O-(pantetheine 4'-phosphoryl)serine mark. Residues 1998–2231 are methyltransferase (CMeT) domain; that stretch reads QYQNVNELIF…GFGRVDWSDG (234 aa). The thioesterase (TE) domain stretch occupies residues 2271 to 2659; that stretch reads GVDLLSPAIR…FISYWRSISF (389 aa).

It functions in the pathway secondary metabolite biosynthesis. In terms of biological role, non-reducing polyketide synthase; part of the gene cluster that mediates the biosynthesis of the tropolone class of fungal maleic anhydrides. The pathway begins with the synthesis of 3-methylorcinaldehyde by the non-reducing polyketide synthase (PKS) tropA. 3-methylorcinaldehyde is the substrate for the FAD-dependent monooxygenase tropB to yield a dearomatized hydroxycyclohexadione. The 2-oxoglutarate-dependent dioxygenase tropC then performs the oxidative ring expansion to provide the first tropolone metabolite stipitaldehyde. Trop D converts stipitaldehyde into stipitacetal which is in turn converted to stipitalide by the short-chain dehydrogenase/reductase tropE. The next steps involve tropF, tropG, tropH, tropI and tropJ to form successive tropolone maleic anhydrides including stipitaldehydic, stipitatonic and stipitatic acids. In Talaromyces stipitatus (strain ATCC 10500 / CBS 375.48 / QM 6759 / NRRL 1006) (Penicillium stipitatum), this protein is 3-methylorcinaldehyde synthase tropA.